We begin with the raw amino-acid sequence, 123 residues long: Putative membrane protein insertion efficiency factor (123 aa).

This sequence belongs to the UPF0161 family.

It localises to the cell inner membrane. In terms of biological role, could be involved in insertion of integral membrane proteins into the membrane. The protein is Putative membrane protein insertion efficiency factor of Beijerinckia indica subsp. indica (strain ATCC 9039 / DSM 1715 / NCIMB 8712).